Reading from the N-terminus, the 332-residue chain is MNPLIFKENRPFDLIAVGRLCVDLNANETQRPMEETRTFTKYVGGSPANIAIGAARLGLQTGFIGKVSDDQMGRFITGYLKDNKINTDQIRIDCTGAVTGLAFTEIKSPEDCSILMYRDNVADLNLDPTEVSEDYIKQSKALLISGTALAKSPSREAVFLALEYARKHDVVVFFDVDYRPYTWQSEAETAVYYNLAAEKSDVIIGTREEFDMMEKLLNYEQSNDQVTAERWFSHYAKIVVIKHGGDGSIAYTRDGQSHRGGIFKTKVLKTFGAGDSYASAFIYGLIQGLEIPQAMRLGGASASIVISKHSCSDAMPTRAEISAFMETAEELV.

It belongs to the carbohydrate kinase PfkB family.

It catalyses the reaction 5-dehydro-2-deoxy-D-gluconate + ATP = 6-phospho-5-dehydro-2-deoxy-D-gluconate + ADP + H(+). Its pathway is polyol metabolism; myo-inositol degradation into acetyl-CoA; acetyl-CoA from myo-inositol: step 5/7. Catalyzes the phosphorylation of 5-dehydro-2-deoxy-D-gluconate (2-deoxy-5-keto-D-gluconate or DKG) to 6-phospho-5-dehydro-2-deoxy-D-gluconate (DKGP). The chain is 5-dehydro-2-deoxygluconokinase 1 from Bacillus cereus (strain ZK / E33L).